We begin with the raw amino-acid sequence, 541 residues long: Chaperonin GroEL 2 (541 aa).

ATP is bound by residues 29–32 (TLGP), 86–90 (DGTTT), glycine 413, 476–478 (NAA), and aspartate 492.

It belongs to the chaperonin (HSP60) family. Forms a cylinder of 14 subunits composed of two heptameric rings stacked back-to-back. Interacts with the co-chaperonin GroES.

It localises to the secreted. It is found in the capsule. The protein resides in the cell surface. Its subcellular location is the cell wall. It carries out the reaction ATP + H2O + a folded polypeptide = ADP + phosphate + an unfolded polypeptide.. In terms of biological role, together with its co-chaperonin GroES, plays an essential role in assisting protein folding. The GroEL-GroES system forms a nano-cage that allows encapsulation of the non-native substrate proteins and provides a physical environment optimized to promote and accelerate protein folding. This Mycolicibacterium vanbaalenii (strain DSM 7251 / JCM 13017 / BCRC 16820 / KCTC 9966 / NRRL B-24157 / PYR-1) (Mycobacterium vanbaalenii) protein is Chaperonin GroEL 2.